A 231-amino-acid polypeptide reads, in one-letter code: Dephospho-CoA kinase (231 aa).

The DPCK domain maps to 29-231 (RVGLTGGIAS…IAGALRFDRR (203 aa)). Position 37–42 (37–42 (ASGKST)) interacts with ATP.

It belongs to the CoaE family.

The protein resides in the cytoplasm. The enzyme catalyses 3'-dephospho-CoA + ATP = ADP + CoA + H(+). It functions in the pathway cofactor biosynthesis; coenzyme A biosynthesis; CoA from (R)-pantothenate: step 5/5. Its function is as follows. Catalyzes the phosphorylation of the 3'-hydroxyl group of dephosphocoenzyme A to form coenzyme A. This chain is Dephospho-CoA kinase, found in Cutibacterium acnes (strain DSM 16379 / KPA171202) (Propionibacterium acnes).